The chain runs to 178 residues: Beta-lytic metalloendopeptidase (178 aa).

Residues Cys-65 and Cys-111 are joined by a disulfide bond. Zn(2+) is bound by residues His-120 and His-122. Cys-155 and Cys-168 form a disulfide bridge.

It belongs to the peptidase M23A family. Zn(2+) is required as a cofactor.

The enzyme catalyses Cleavage of N-acetylmuramoyl-|-Ala, and of the insulin B chain at 23-Gly-|-Phe-24 &gt; 18-Val-|-Cys(SO3H).. This chain is Beta-lytic metalloendopeptidase, found in Lysobacter enzymogenes.